A 199-amino-acid chain; its full sequence is Probable GTP-binding protein EngB (199 aa).

The EngB-type G domain maps to 28-199; that stretch reads DLPEIALAGR…DSWDAILEQV (172 aa). GTP contacts are provided by residues 36–43, 63–67, 81–84, 148–151, and 180–182; these read GRSNVGKS, GKTQL, DVPG, TKAD, and FSS. The Mg(2+) site is built by S43 and T65.

The protein belongs to the TRAFAC class TrmE-Era-EngA-EngB-Septin-like GTPase superfamily. EngB GTPase family. Mg(2+) is required as a cofactor.

In terms of biological role, necessary for normal cell division and for the maintenance of normal septation. The chain is Probable GTP-binding protein EngB from Streptococcus pyogenes serotype M1.